A 379-amino-acid polypeptide reads, in one-letter code: MSELSFDAPVWRHGKALRKGYTTGSCATAAAKVAELMVLRQHLIHQVSIVTPSGVTLCLNVESPHIEGQQAIAAIRKDGGDDVDATHGMLIFARVTLNDSGEITLTGGEGIGTVTRKGVGLPLGSAAINRTPRHTIESAVREAIGPARGADVEIFAPEGEVRAQKTYNSRLGILGGISIIGTTGIVTPMSEESWKRSLSLELEIKRASGLTRVILVPGNHGERFVREQMGVDTQAVVTMSNFVGYMIEEAVRLGFCQIVLVGHPGKLIKIAAGIFHTHSHIADARMETLVAHLALLGAPLELLTLVGDCDTTEAAMEHIEAYGFGHIYNHLARRICLRVMQMLRFTKTPPVCDAILFSFDNHILGSNRPVDEIAKELQC.

This sequence belongs to the CbiD family.

It carries out the reaction Co-precorrin-5B + S-adenosyl-L-methionine = Co-precorrin-6A + S-adenosyl-L-homocysteine. The protein operates within cofactor biosynthesis; adenosylcobalamin biosynthesis; cob(II)yrinate a,c-diamide from sirohydrochlorin (anaerobic route): step 6/10. Functionally, catalyzes the methylation of C-1 in cobalt-precorrin-5B to form cobalt-precorrin-6A. The sequence is that of Cobalt-precorrin-5B C(1)-methyltransferase from Salmonella typhi.